A 379-amino-acid chain; its full sequence is Protein RecA (379 aa).

The span at 1–14 (MSNEIKSISSSNSS) shows a compositional bias: low complexity. The tract at residues 1-24 (MSNEIKSISSSNSSCPPNEARSGE) is disordered. 84–91 (GPESSGKT) is an ATP binding site.

It belongs to the RecA family.

The protein localises to the cytoplasm. Functionally, can catalyze the hydrolysis of ATP in the presence of single-stranded DNA, the ATP-dependent uptake of single-stranded DNA by duplex DNA, and the ATP-dependent hybridization of homologous single-stranded DNAs. It interacts with LexA causing its activation and leading to its autocatalytic cleavage. The sequence is that of Protein RecA from Prochlorococcus marinus (strain SARG / CCMP1375 / SS120).